The primary structure comprises 124 residues: Small ribosomal subunit protein uS12 (124 aa).

The residue at position 89 (aspartate 89) is a 3-methylthioaspartic acid.

This sequence belongs to the universal ribosomal protein uS12 family. Part of the 30S ribosomal subunit. Contacts proteins S8 and S17. May interact with IF1 in the 30S initiation complex.

With S4 and S5 plays an important role in translational accuracy. Its function is as follows. Interacts with and stabilizes bases of the 16S rRNA that are involved in tRNA selection in the A site and with the mRNA backbone. Located at the interface of the 30S and 50S subunits, it traverses the body of the 30S subunit contacting proteins on the other side and probably holding the rRNA structure together. The combined cluster of proteins S8, S12 and S17 appears to hold together the shoulder and platform of the 30S subunit. This is Small ribosomal subunit protein uS12 from Serratia proteamaculans (strain 568).